A 126-amino-acid polypeptide reads, in one-letter code: Fluoride-specific ion channel FluC (126 aa).

4 helical membrane passes run 5-25 (ILVA…GAGV), 37-57 (VAIM…VVWA), 65-85 (LSPF…AFSL), and 101-121 (LYVA…LWVA). The Na(+) site is built by G75 and T78.

This sequence belongs to the fluoride channel Fluc/FEX (TC 1.A.43) family.

The protein resides in the cell inner membrane. It catalyses the reaction fluoride(in) = fluoride(out). Its activity is regulated as follows. Na(+) is not transported, but it plays an essential structural role and its presence is essential for fluoride channel function. In terms of biological role, fluoride-specific ion channel. Important for reducing fluoride concentration in the cell, thus reducing its toxicity. This chain is Fluoride-specific ion channel FluC, found in Roseobacter denitrificans (strain ATCC 33942 / OCh 114) (Erythrobacter sp. (strain OCh 114)).